The chain runs to 580 residues: Alpha-glucosidase (580 aa).

A signal peptide spans 1–19 (MRPLGALSLFALLATTVSG). Residues Asn-102 and Asn-127 are each glycosylated (N-linked (GlcNAc...) asparagine). The Nucleophile role is filled by Asp-224. Catalysis depends on Glu-290, which acts as the Proton donor. Asn-501 carries N-linked (GlcNAc...) asparagine glycosylation. A helical membrane pass occupies residues 560-580 (AAAINLSIGLLLAIMARYIFV).

This sequence belongs to the glycosyl hydrolase 13 family. As to quaternary structure, (Microbial infection) Binds to L.sphaericus BinB subunit of the binary toxin BinAB. In terms of tissue distribution, in 4th-instar larvae produced in the brush border membranes of the gastric caeca and the posterior stomach cells (at protein level).

The protein localises to the membrane. It catalyses the reaction Hydrolysis of terminal, non-reducing (1-&gt;4)-linked alpha-D-glucose residues with release of alpha-D-glucose.. Functionally, probably an alpha-glucosidase, it has no alpha-amylase function. In terms of biological role, (Microbial infection) Serves as the larval receptor for Lysinibacillus sphaericus BinB toxin. This Culex pipiens (House mosquito) protein is Alpha-glucosidase.